The sequence spans 612 residues: Glutamine--fructose-6-phosphate aminotransferase [isomerizing] (612 aa).

Residue cysteine 2 is the Nucleophile; for GATase activity of the active site. In terms of domain architecture, Glutamine amidotransferase type-2 spans 2 to 217 (CGIVGGVAER…EGDIARLTRD (216 aa)). SIS domains lie at 283–428 (AEAD…VKEQ) and 461–602 (LSEL…VDQP). Catalysis depends on lysine 607, which acts as the For Fru-6P isomerization activity.

As to quaternary structure, homodimer.

It localises to the cytoplasm. The enzyme catalyses D-fructose 6-phosphate + L-glutamine = D-glucosamine 6-phosphate + L-glutamate. Catalyzes the first step in hexosamine metabolism, converting fructose-6P into glucosamine-6P using glutamine as a nitrogen source. This Acinetobacter baylyi (strain ATCC 33305 / BD413 / ADP1) protein is Glutamine--fructose-6-phosphate aminotransferase [isomerizing].